We begin with the raw amino-acid sequence, 607 residues long: Type 3 secretion system secretin (607 aa).

A signal peptide spans 1–33 (MAPACTTAHRRRAPLAAVLMLSLLPLLSPHADA). The segment at 277–332 (ASSSDRVPVSPPLPGSGAAAAAGSPASVWPELSKGRRDESNPIDAGGGAELASDAP) is disordered. The span at 291–306 (GSGAAAAAGSPASVWP) shows a compositional bias: low complexity.

It belongs to the bacterial secretin family. T3SS SctC subfamily. As to quaternary structure, the core secretion machinery of the T3SS is composed of approximately 20 different proteins, including cytoplasmic components, a base, an export apparatus and a needle. This subunit is part of the base, which anchors the injectisome in the bacterial cell envelope. Forms a stable homooligomeric complex.

It localises to the cell outer membrane. Its function is as follows. Component of the type III secretion system (T3SS), also called injectisome, which is used to inject bacterial effector proteins into eukaryotic host cells. Forms a ring-shaped multimeric structure with an apparent central pore in the outer membrane. Necessary for both basic pathogenicity and the induction of the hypersensitive response in resistant plants. This is Type 3 secretion system secretin from Xanthomonas euvesicatoria.